A 627-amino-acid chain; its full sequence is Probable inactive L-type lectin-domain containing receptor kinase III.1 (627 aa).

The signal sequence occupies residues 1–23; it reads MITFKSIALTIIFLSYFVSCVSS. Residues 24–303 are Extracellular-facing; that stretch reads QRETKFLNHG…STEKKSNNTM (280 aa). The segment at 26–262 is legume-lectin like; sequence ETKFLNHGFL…SHFVLGWSFN (237 aa). Residues asparagine 57, asparagine 78, asparagine 127, asparagine 184, asparagine 202, asparagine 209, and asparagine 230 are each glycosylated (N-linked (GlcNAc...) asparagine). Residues 272–297 form a disordered region; the sequence is ITKLPSLPDPPPTLSPSPSPPVSTEK. Residues 278–292 show a composition bias toward pro residues; sequence LPDPPPTLSPSPSPP. A glycan (N-linked (GlcNAc...) asparagine) is linked at asparagine 300. Residues 304 to 324 traverse the membrane as a helical segment; sequence LIIIVAASATVALMILIFSGF. Over 325–627 the chain is Cytoplasmic; sequence WFLRRDKIFF…PHDDYLFYGV (303 aa). Residues 353 to 623 enclose the Protein kinase domain; that stretch reads FDNSKLLGER…TEALPHDDYL (271 aa). ATP-binding positions include 359–367 and lysine 381; that span reads LGERNSGSF.

This sequence in the C-terminal section; belongs to the protein kinase superfamily. Ser/Thr protein kinase family. In the N-terminal section; belongs to the leguminous lectin family.

It is found in the cell membrane. This chain is Probable inactive L-type lectin-domain containing receptor kinase III.1 (LECRK31), found in Arabidopsis thaliana (Mouse-ear cress).